The chain runs to 615 residues: Medium-chain acyl-CoA ligase ACSF2, mitochondrial (615 aa).

The transit peptide at 1–42 directs the protein to the mitochondrion; that stretch reads MAVYVGMLRVARLCARSPRVLGARVGLSRVWQEARLWGVRPL. Lys179 carries the post-translational modification N6-acetyllysine. Lys182 carries the post-translational modification N6-acetyllysine; alternate. At Lys182 the chain carries N6-succinyllysine; alternate. The residue at position 199 (Lys199) is an N6-acetyllysine. 263–271 is an ATP binding site; it reads TSGTTGSPK. Lys340 and Lys398 each carry N6-acetyllysine. Lys478 bears the N6-succinyllysine mark. ATP contacts are provided by Asp493 and Arg508. The residue at position 510 (Lys510) is an N6-acetyllysine. N6-acetyllysine; alternate is present on residues Lys544 and Lys570. Residues Lys544 and Lys570 each carry the N6-succinyllysine; alternate modification. Position 599 (Lys599) interacts with ATP. Lys599 carries the N6-succinyllysine modification.

The protein belongs to the ATP-dependent AMP-binding enzyme family.

Its subcellular location is the mitochondrion. The enzyme catalyses a medium-chain fatty acid + ATP + CoA = a medium-chain fatty acyl-CoA + AMP + diphosphate. The catalysed reaction is octanoate + ATP + CoA = octanoyl-CoA + AMP + diphosphate. In terms of biological role, acyl-CoA synthases catalyze the initial reaction in fatty acid metabolism, by forming a thioester with CoA. Has some preference toward medium-chain substrates. Plays a role in adipocyte differentiation. This is Medium-chain acyl-CoA ligase ACSF2, mitochondrial from Bos taurus (Bovine).